We begin with the raw amino-acid sequence, 192 residues long: Fumarylpyruvate hydrolase (192 aa).

A divalent metal cation contacts are provided by Glu-41, Glu-43, and Asp-72.

Belongs to the FAH family. Mg(2+) serves as cofactor. Requires Mn(2+) as cofactor.

The enzyme catalyses 3-fumarylpyruvate + H2O = fumarate + pyruvate + H(+). Its pathway is aromatic compound metabolism; naphthalene degradation. Its function is as follows. Involved in the catabolism of gentisate (2,5-dihydroxybenzoate) a key intermediates in the aerobic pathways for the metabolism of a large number of aromatic compoun such as naphthalene. Catalyzes the hydrolytic cleavage of fumarylpyruvate to form fumarate and pyruvate. This is Fumarylpyruvate hydrolase from Ralstonia sp.